A 1234-amino-acid polypeptide reads, in one-letter code: Transcription-repair-coupling factor (1234 aa).

One can recognise a Helicase ATP-binding domain in the interval 663 to 824 (DMEKPIPMDR…LAGIREMSTI (162 aa)). An ATP-binding site is contributed by 676 to 683 (GDVGYGKT). Residues 777-780 (DEEQ) carry the DEEQ box motif. Residues 842 to 999 (DDKQIAAALR…GMAVALKDLE (158 aa)) enclose the Helicase C-terminal domain. The tract at residues 1207–1234 (RQHIGITNPSPPGEDGRGRNTTIKERQP) is disordered. Basic and acidic residues predominate over residues 1220–1234 (EDGRGRNTTIKERQP).

The protein in the N-terminal section; belongs to the UvrB family. It in the C-terminal section; belongs to the helicase family. RecG subfamily.

It is found in the cytoplasm. Its function is as follows. Couples transcription and DNA repair by recognizing RNA polymerase (RNAP) stalled at DNA lesions. Mediates ATP-dependent release of RNAP and its truncated transcript from the DNA, and recruitment of nucleotide excision repair machinery to the damaged site. This chain is Transcription-repair-coupling factor, found in Mycobacterium bovis (strain ATCC BAA-935 / AF2122/97).